An 83-amino-acid chain; its full sequence is ATP synthase subunit c (83 aa).

A run of 2 helical transmembrane segments spans residues 10–30 (IAVALLIGMGALGTAIGFGLL) and 52–72 (MFIVAGLLDAVTMIGVGIALF).

This sequence belongs to the ATPase C chain family. In terms of assembly, F-type ATPases have 2 components, F(1) - the catalytic core - and F(0) - the membrane proton channel. F(1) has five subunits: alpha(3), beta(3), gamma(1), delta(1), epsilon(1). F(0) has three main subunits: a(1), b(2) and c(10-14). The alpha and beta chains form an alternating ring which encloses part of the gamma chain. F(1) is attached to F(0) by a central stalk formed by the gamma and epsilon chains, while a peripheral stalk is formed by the delta and b chains.

The protein resides in the cell inner membrane. F(1)F(0) ATP synthase produces ATP from ADP in the presence of a proton or sodium gradient. F-type ATPases consist of two structural domains, F(1) containing the extramembraneous catalytic core and F(0) containing the membrane proton channel, linked together by a central stalk and a peripheral stalk. During catalysis, ATP synthesis in the catalytic domain of F(1) is coupled via a rotary mechanism of the central stalk subunits to proton translocation. Its function is as follows. Key component of the F(0) channel; it plays a direct role in translocation across the membrane. A homomeric c-ring of between 10-14 subunits forms the central stalk rotor element with the F(1) delta and epsilon subunits. The protein is ATP synthase subunit c of Shewanella loihica (strain ATCC BAA-1088 / PV-4).